A 290-amino-acid polypeptide reads, in one-letter code: Alpha-1,2-colitosyltransferase (290 aa).

This sequence belongs to the glycosyltransferase 11 family. The cofactor is Does not require a metal cofactor..

It carries out the reaction GDP-beta-L-colitose + beta-D-galactosyl-(1-&gt;3)-N-acetyl-D-glucosamine = alpha-L-colitosyl-(1-&gt;2)-beta-D-galactosyl-(1-&gt;3)-N-acetyl-D-glucosamine + GDP + H(+). The protein operates within bacterial outer membrane biogenesis; LPS O-antigen biosynthesis. Its activity is regulated as follows. Addition of metal ions dramatically decreases the activity to 0-40%. Involved in the biosynthesis of the lipopolysaccharide (LPS) O-antigen region. Catalyzes the transfer of colitose from GDP-colitose to the galactose residue of beta-Gal-(1-&gt;3)-GlcNAc (lacto-N-biose) via an alpha1,2-linkage. Is specific for beta-Gal-(1-&gt;3)-GlcNAc, but can use GDP-L-fucose as the sugar donor with almost the same efficiency as GDP-L-colitose. In Escherichia coli, this protein is Alpha-1,2-colitosyltransferase.